The primary structure comprises 208 residues: Thymidylate kinase (208 aa).

G12–S19 lines the ATP pocket.

Belongs to the thymidylate kinase family.

The catalysed reaction is dTMP + ATP = dTDP + ADP. Functionally, phosphorylation of dTMP to form dTDP in both de novo and salvage pathways of dTTP synthesis. The polypeptide is Thymidylate kinase (Bordetella bronchiseptica (strain ATCC BAA-588 / NCTC 13252 / RB50) (Alcaligenes bronchisepticus)).